A 409-amino-acid polypeptide reads, in one-letter code: Ubiquitin-associated domain-containing protein 1 (409 aa).

An N-acetylmethionine modification is found at Met-1. The Ubiquitin-like domain occupies 14 to 98 (LRLHICAADG…LLLIKKRAPS (85 aa)). The UBA 1 domain maps to 187–231 (DEDERVDETALRQLTEMGFPESRASKALRLNHMSVPQAMEWLIEH). A disordered region spans residues 235-273 (PAIDTPLPGHAAQAEASAAAATSSSSSEAAVGTSVEDEE). The span at 245–264 (AAQAEASAAAATSSSSSEAA) shows a compositional bias: low complexity. The UBA 2 domain maps to 292-332 (RADARAVISLMEMGFDEKEVIDALRVNNNQQNAACEWLLGD). The STI1 domain maps to 357 to 396 (NPVVQLGLTNPKTLLAFEDMLENPLNSTQWMNDPETGPVM).

In terms of assembly, component of the KPC complex composed of RNF123/KPC1 and UBAC1/KPC2. Interacts (via ubiquitin-like domain) with RNF123. Interacts (via ubiquitin-like and UBA domains) with the proteasome via its N-terminal domain.

It localises to the cytoplasm. The protein operates within protein modification; protein ubiquitination. Non-catalytic component of the KPC complex, a E3 ubiquitin-protein ligase complex that mediates polyubiquitination of target proteins, such as CDKN1B and NFKB1. The KPC complex catalyzes polyubiquitination and proteasome-mediated degradation of CDKN1B during G1 phase of the cell cycle. The KPC complex also acts as a key regulator of the NF-kappa-B signaling by promoting maturation of the NFKB1 component of NF-kappa-B by catalyzing ubiquitination of the NFKB1 p105 precursor. Within the KPC complex, UBAC1 acts as an adapter that promotes the transfer of target proteins that have been polyubiquitinated by RNF123/KPC1 to the 26S proteasome. This chain is Ubiquitin-associated domain-containing protein 1 (Ubac1), found in Rattus norvegicus (Rat).